A 427-amino-acid polypeptide reads, in one-letter code: Glutamate-1-semialdehyde 2,1-aminomutase (427 aa).

Lysine 265 is modified (N6-(pyridoxal phosphate)lysine).

It belongs to the class-III pyridoxal-phosphate-dependent aminotransferase family. HemL subfamily. Homodimer. Pyridoxal 5'-phosphate is required as a cofactor.

It localises to the cytoplasm. The enzyme catalyses (S)-4-amino-5-oxopentanoate = 5-aminolevulinate. The protein operates within porphyrin-containing compound metabolism; protoporphyrin-IX biosynthesis; 5-aminolevulinate from L-glutamyl-tRNA(Glu): step 2/2. The protein is Glutamate-1-semialdehyde 2,1-aminomutase of Pseudomonas putida (strain W619).